Reading from the N-terminus, the 325-residue chain is Elongation factor P--(R)-beta-lysine ligase (325 aa).

Residue 76–78 participates in substrate binding; the sequence is SPE. ATP-binding positions include 100–102 and Asn-109; that span reads RNE. Residue Tyr-118 participates in substrate binding. Position 244 to 245 (244 to 245) interacts with ATP; it reads EL. Position 251 (Glu-251) interacts with substrate. Gly-300 lines the ATP pocket.

Belongs to the class-II aminoacyl-tRNA synthetase family. EpmA subfamily. As to quaternary structure, homodimer.

The catalysed reaction is D-beta-lysine + L-lysyl-[protein] + ATP = N(6)-((3R)-3,6-diaminohexanoyl)-L-lysyl-[protein] + AMP + diphosphate + H(+). With EpmB is involved in the beta-lysylation step of the post-translational modification of translation elongation factor P (EF-P) on 'Lys-34'. Catalyzes the ATP-dependent activation of (R)-beta-lysine produced by EpmB, forming a lysyl-adenylate, from which the beta-lysyl moiety is then transferred to the epsilon-amino group of EF-P 'Lys-34'. The protein is Elongation factor P--(R)-beta-lysine ligase of Salmonella agona (strain SL483).